The following is a 300-amino-acid chain: MVLLLRYRSLTINLTPLIPKSQKFHTLQSFRNPNFISIPKISASTNNPTTTTNRSISDATKFAKSVLFIPPGVEIEELTDDMVLPGSNIVIGPFAGHSQIKEVEFVKSSARARDCPKDDRPEIAILGRSNVGKSSLINCLVRKKEVALTSKKPGKTQLINHFLVNKSWYIVDLPGYGFAKVSDAAKTDWSAFTKGYFLNRDSLVCVLLLIDASVPPQKIDLDCANWLGRNNVPMTFVFTKCDKMKATKGKRPDENIKAFQQIIRENFKVHPPWILTSSVSGLGRDELLLHMSQLRNYWDQ.

One can recognise an EngB-type G domain in the interval 119 to 297; it reads DRPEIAILGR…LLHMSQLRNY (179 aa). Residues 127–134, 154–158, 172–175, 239–242, and 276–278 contribute to the GTP site; these read GRSNVGKS, GKTQL, DLPG, TKCD, and TSS. 2 residues coordinate Mg(2+): Ser-134 and Thr-156.

It belongs to the TRAFAC class TrmE-Era-EngA-EngB-Septin-like GTPase superfamily. EngB GTPase family. The cofactor is Mg(2+).

The sequence is that of GTP-binding protein At2g22870 (EMB2001) from Arabidopsis thaliana (Mouse-ear cress).